Consider the following 160-residue polypeptide: Nucleotide-binding protein VSAL_I1728 (160 aa).

Belongs to the YajQ family.

Nucleotide-binding protein. In Aliivibrio salmonicida (strain LFI1238) (Vibrio salmonicida (strain LFI1238)), this protein is Nucleotide-binding protein VSAL_I1728.